The following is a 155-amino-acid chain: Endoribonuclease YbeY (155 aa).

Residues His114, His118, and His124 each contribute to the Zn(2+) site.

This sequence belongs to the endoribonuclease YbeY family. It depends on Zn(2+) as a cofactor.

The protein localises to the cytoplasm. Its function is as follows. Single strand-specific metallo-endoribonuclease involved in late-stage 70S ribosome quality control and in maturation of the 3' terminus of the 16S rRNA. The sequence is that of Endoribonuclease YbeY from Enterobacter sp. (strain 638).